The sequence spans 633 residues: Lysophospholipase 1 (633 aa).

The N-terminal stretch at 1–20 is a signal peptide; sequence MKTTTVACAVAGLLFSCVSG. Residues 47–594 form the PLA2c domain; sequence GCPASRPTIR…QRYCWDGSLN (548 aa). Residues asparagine 64, asparagine 104, asparagine 139, asparagine 173, asparagine 246, asparagine 290, asparagine 329, asparagine 358, asparagine 397, asparagine 450, asparagine 463, asparagine 469, asparagine 497, asparagine 500, asparagine 521, asparagine 549, asparagine 555, and asparagine 594 are each glycosylated (N-linked (GlcNAc...) asparagine). The GPI-like-anchor amidated serine moiety is linked to residue serine 609. The propeptide at 610-633 is removed in mature form; it reads AASGIIPSISTVAMAVVFAAWTIF.

This sequence belongs to the lysophospholipase family. Post-translationally, the GPI-like anchor contains a phosphoceramide lipid group. The anchor position has not been determined.

The protein resides in the cell membrane. The catalysed reaction is a 1-acyl-sn-glycero-3-phosphocholine + H2O = sn-glycerol 3-phosphocholine + a fatty acid + H(+). In terms of biological role, catalyzes the release of fatty acids from lysophospholipids. The polypeptide is Lysophospholipase 1 (plb1) (Aspergillus fumigatus (strain CBS 144.89 / FGSC A1163 / CEA10) (Neosartorya fumigata)).